A 152-amino-acid polypeptide reads, in one-letter code: MKKRLFVLSLILLVALDQLSKFWIVSHIALGEVKPFIPGIVSLTYLQNNGAAFSILQDQQWFFVVITVLVIGYAIYYLATHPHLNIWKQLALLLIISGGIGNFIDRLRLAYVIDMVHLDFVDFAIFNVADSYLTVGVILLVICLWKEEDYGN.

3 consecutive transmembrane segments (helical) span residues 5–25, 61–81, and 84–104; these read LFVL…FWIV, WFFV…LATH, and LNIW…GNFI. Residues aspartate 114 and aspartate 130 contribute to the active site. Residues 125–145 form a helical membrane-spanning segment; it reads IFNVADSYLTVGVILLVICLW.

The protein belongs to the peptidase A8 family.

The protein localises to the cell membrane. It catalyses the reaction Release of signal peptides from bacterial membrane prolipoproteins. Hydrolyzes -Xaa-Yaa-Zaa-|-(S,diacylglyceryl)Cys-, in which Xaa is hydrophobic (preferably Leu), and Yaa (Ala or Ser) and Zaa (Gly or Ala) have small, neutral side chains.. Its pathway is protein modification; lipoprotein biosynthesis (signal peptide cleavage). This protein specifically catalyzes the removal of signal peptides from prolipoproteins. The chain is Lipoprotein signal peptidase from Streptococcus pyogenes serotype M3 (strain ATCC BAA-595 / MGAS315).